The chain runs to 153 residues: Ribonuclease K6 (153 aa).

The signal sequence occupies residues 1 to 27 (MVVDLPRYLPLLLLLELWEPMYLLCSQ). Histidine 41 functions as the Proton acceptor in the catalytic mechanism. 4 cysteine pairs are disulfide-bonded: cysteine 49/cysteine 107, cysteine 63/cysteine 117, cysteine 81/cysteine 132, and cysteine 88/cysteine 95. N-linked (GlcNAc...) asparagine glycosylation occurs at asparagine 58. 64-68 (KQINT) contributes to the substrate binding site. A glycan (N-linked (GlcNAc...) asparagine) is linked at asparagine 85. Substrate is bound at residue lysine 89. Histidine 148 functions as the Proton donor in the catalytic mechanism.

This sequence belongs to the pancreatic ribonuclease family. In terms of assembly, interacts (via N-terminus) with bacterial lipopolysaccharide (LPS). In terms of tissue distribution, highly expressed in spleen (at protein level). Has little or no expression in healthy kidneys (at protein level). Detected at high levels in infected kidneys (at protein level). Expressed at low levels in bladder. Also detected in skeletal muscle, heart and bone marrow.

It localises to the secreted. It is found in the lysosome. The protein resides in the cytoplasmic granule. Its function is as follows. Ribonuclease which shows a preference for the pyrimidines uridine and cytosine. Has potent antibacterial activity against a range of Gram-positive and Gram-negative bacteria, including P.aeruginosa, A.baumanii, M.luteus, S.aureus, E.faecalis, E.faecium, S.saprophyticus and E.coli. Causes loss of bacterial membrane integrity, and also promotes agglutination of Gram-negative bacteria. Probably contributes to urinary tract sterility. Bactericidal activity is independent of RNase activity. This Mus musculus (Mouse) protein is Ribonuclease K6 (Rnase6).